Reading from the N-terminus, the 325-residue chain is Elongation factor P--(R)-beta-lysine ligase (325 aa).

Position 76–78 (76–78) interacts with substrate; it reads SPE. Residues 100–102 and Asn109 contribute to the ATP site; that span reads RNE. Substrate is bound at residue Tyr118. 244–245 lines the ATP pocket; that stretch reads EL. Glu251 is a binding site for substrate. Gly300 contacts ATP.

The protein belongs to the class-II aminoacyl-tRNA synthetase family. EpmA subfamily. In terms of assembly, homodimer.

It catalyses the reaction D-beta-lysine + L-lysyl-[protein] + ATP = N(6)-((3R)-3,6-diaminohexanoyl)-L-lysyl-[protein] + AMP + diphosphate + H(+). Functionally, with EpmB is involved in the beta-lysylation step of the post-translational modification of translation elongation factor P (EF-P) on 'Lys-34'. Catalyzes the ATP-dependent activation of (R)-beta-lysine produced by EpmB, forming a lysyl-adenylate, from which the beta-lysyl moiety is then transferred to the epsilon-amino group of EF-P 'Lys-34'. This Salmonella arizonae (strain ATCC BAA-731 / CDC346-86 / RSK2980) protein is Elongation factor P--(R)-beta-lysine ligase.